The sequence spans 306 residues: D-alanine--D-alanine ligase (306 aa).

One can recognise an ATP-grasp domain in the interval 101–303 (KLLWQGAGLP…FSQLVVRILE (203 aa)). 134–189 (ISALGLPLIVKPSREGSSVGMTKVVEENALQGALSLAFQHDDEILIEKWLCGPEFT) provides a ligand contact to ATP. Asp-257, Glu-270, and Asn-272 together coordinate Mg(2+).

This sequence belongs to the D-alanine--D-alanine ligase family. Requires Mg(2+) as cofactor. Mn(2+) serves as cofactor.

It is found in the cytoplasm. The enzyme catalyses 2 D-alanine + ATP = D-alanyl-D-alanine + ADP + phosphate + H(+). It participates in cell wall biogenesis; peptidoglycan biosynthesis. In terms of biological role, cell wall formation. The polypeptide is D-alanine--D-alanine ligase (Salmonella paratyphi A (strain ATCC 9150 / SARB42)).